The sequence spans 83 residues: Mu-theraphotoxin-Hhn2o (83 aa).

An N-terminal signal peptide occupies residues 1–21 (MKASMFLALAGLVLLFVVGYA). A propeptide spanning residues 22–48 (SESEEKEFPIELLSKIFAVDVFKGEER) is cleaved from the precursor. Cystine bridges form between cysteine 50/cysteine 65, cysteine 57/cysteine 70, and cysteine 64/cysteine 77. Leucine amide is present on leucine 81.

Belongs to the neurotoxin 10 (Hwtx-1) family. 15 (Hntx-3) subfamily. As to quaternary structure, monomer. In terms of tissue distribution, expressed by the venom gland.

It localises to the secreted. Its function is as follows. Lethal neurotoxin. Selectively blocks tetrodotoxin-sensitive voltage-gated sodium channels (Nav). Does not affect tetrodotoxin-resistant voltage-gated sodium channels or calcium channels. In Cyriopagopus hainanus (Chinese bird spider), this protein is Mu-theraphotoxin-Hhn2o.